Reading from the N-terminus, the 360-residue chain is Dual-specificity RNA methyltransferase RlmN (360 aa).

Catalysis depends on glutamate 91, which acts as the Proton acceptor. The region spanning 110–343 (RSEKYTVCIS…CTIRESKGLD (234 aa)) is the Radical SAM core domain. A disulfide bridge links cysteine 117 with cysteine 348. [4Fe-4S] cluster contacts are provided by cysteine 124, cysteine 128, and cysteine 131. Residues 174–175 (GE), serine 206, 229–231 (SLH), and asparagine 305 each bind S-adenosyl-L-methionine. Catalysis depends on cysteine 348, which acts as the S-methylcysteine intermediate.

The protein belongs to the radical SAM superfamily. RlmN family. The cofactor is [4Fe-4S] cluster.

The protein resides in the cytoplasm. The catalysed reaction is adenosine(2503) in 23S rRNA + 2 reduced [2Fe-2S]-[ferredoxin] + 2 S-adenosyl-L-methionine = 2-methyladenosine(2503) in 23S rRNA + 5'-deoxyadenosine + L-methionine + 2 oxidized [2Fe-2S]-[ferredoxin] + S-adenosyl-L-homocysteine. The enzyme catalyses adenosine(37) in tRNA + 2 reduced [2Fe-2S]-[ferredoxin] + 2 S-adenosyl-L-methionine = 2-methyladenosine(37) in tRNA + 5'-deoxyadenosine + L-methionine + 2 oxidized [2Fe-2S]-[ferredoxin] + S-adenosyl-L-homocysteine. Its function is as follows. Specifically methylates position 2 of adenine 2503 in 23S rRNA and position 2 of adenine 37 in tRNAs. m2A2503 modification seems to play a crucial role in the proofreading step occurring at the peptidyl transferase center and thus would serve to optimize ribosomal fidelity. The sequence is that of Dual-specificity RNA methyltransferase RlmN from Aliarcobacter butzleri (strain RM4018) (Arcobacter butzleri).